The chain runs to 1201 residues: DNA-directed RNA polymerase subunit beta' (1201 aa).

Zn(2+) contacts are provided by cysteine 60, cysteine 62, cysteine 75, and cysteine 78. The Mg(2+) site is built by aspartate 449, aspartate 451, and aspartate 453. Zn(2+) is bound by residues cysteine 818, cysteine 892, cysteine 899, and cysteine 902.

The protein belongs to the RNA polymerase beta' chain family. The RNAP catalytic core consists of 2 alpha, 1 beta, 1 beta' and 1 omega subunit. When a sigma factor is associated with the core the holoenzyme is formed, which can initiate transcription. Requires Mg(2+) as cofactor. Zn(2+) is required as a cofactor.

The catalysed reaction is RNA(n) + a ribonucleoside 5'-triphosphate = RNA(n+1) + diphosphate. DNA-dependent RNA polymerase catalyzes the transcription of DNA into RNA using the four ribonucleoside triphosphates as substrates. This Listeria monocytogenes serotype 4b (strain F2365) protein is DNA-directed RNA polymerase subunit beta'.